The sequence spans 240 residues: Probable septum site-determining protein MinC (240 aa).

This sequence belongs to the MinC family. As to quaternary structure, interacts with MinD and FtsZ.

Cell division inhibitor that blocks the formation of polar Z ring septums. Rapidly oscillates between the poles of the cell to destabilize FtsZ filaments that have formed before they mature into polar Z rings. Prevents FtsZ polymerization. The polypeptide is Probable septum site-determining protein MinC (Aeromonas hydrophila subsp. hydrophila (strain ATCC 7966 / DSM 30187 / BCRC 13018 / CCUG 14551 / JCM 1027 / KCTC 2358 / NCIMB 9240 / NCTC 8049)).